We begin with the raw amino-acid sequence, 270 residues long: MPEIIIVKNEAEAGEIYGRCVADLIKAKPDAVLGLATGSSPLAAYQALAKIVKDEAIDVSGVRGFALDEYIGLPLTHPESYHATIHRTVVEPLGLDPAKVHVPGDVLNGTPLEDGDKVALAGPAYDRAIEAAGGIDVQILGIGTDGHVGFNEPGSSLASGTRVKTLAEQTRVDNARFFDNDINQVPTHCITQGIGTIMKARHLVLLAFGAGKAEAIEETVEGGLSAFCPASALQMHPHATIIVDEEAASRLRHKDYYRYAYTHKPAWQGI.

D68 (proton acceptor; for enolization step) is an active-site residue. Residue D145 is the For ring-opening step of the active site. H147 functions as the Proton acceptor; for ring-opening step in the catalytic mechanism. The For ring-opening step role is filled by E152.

This sequence belongs to the glucosamine/galactosamine-6-phosphate isomerase family. NagB subfamily.

The enzyme catalyses alpha-D-glucosamine 6-phosphate + H2O = beta-D-fructose 6-phosphate + NH4(+). It functions in the pathway amino-sugar metabolism; N-acetylneuraminate degradation; D-fructose 6-phosphate from N-acetylneuraminate: step 5/5. Its function is as follows. Catalyzes the reversible isomerization-deamination of glucosamine 6-phosphate (GlcN6P) to form fructose 6-phosphate (Fru6P) and ammonium ion. The polypeptide is Glucosamine-6-phosphate deaminase (Bifidobacterium longum subsp. infantis (strain ATCC 15697 / DSM 20088 / JCM 1222 / NCTC 11817 / S12)).